Consider the following 417-residue polypeptide: Multifunctional CCA protein (417 aa).

ATP contacts are provided by Gly8 and Arg11. Residues Gly8 and Arg11 each contribute to the CTP site. Mg(2+) contacts are provided by Asp21 and Asp23. Positions 91, 137, and 140 each coordinate ATP. CTP contacts are provided by Arg91, Arg137, and Arg140. One can recognise an HD domain in the interval 225 to 326 (SGIHTLMTLQ…LNVLKKTDAF (102 aa)).

It belongs to the tRNA nucleotidyltransferase/poly(A) polymerase family. Bacterial CCA-adding enzyme type 1 subfamily. Monomer. Can also form homodimers and oligomers. It depends on Mg(2+) as a cofactor. Requires Ni(2+) as cofactor.

The catalysed reaction is a tRNA precursor + 2 CTP + ATP = a tRNA with a 3' CCA end + 3 diphosphate. The enzyme catalyses a tRNA with a 3' CCA end + 2 CTP + ATP = a tRNA with a 3' CCACCA end + 3 diphosphate. Functionally, catalyzes the addition and repair of the essential 3'-terminal CCA sequence in tRNAs without using a nucleic acid template. Adds these three nucleotides in the order of C, C, and A to the tRNA nucleotide-73, using CTP and ATP as substrates and producing inorganic pyrophosphate. tRNA 3'-terminal CCA addition is required both for tRNA processing and repair. Also involved in tRNA surveillance by mediating tandem CCA addition to generate a CCACCA at the 3' terminus of unstable tRNAs. While stable tRNAs receive only 3'-terminal CCA, unstable tRNAs are marked with CCACCA and rapidly degraded. In Neisseria meningitidis serogroup C / serotype 2a (strain ATCC 700532 / DSM 15464 / FAM18), this protein is Multifunctional CCA protein.